We begin with the raw amino-acid sequence, 283 residues long: Phosphate import ATP-binding protein PstB (283 aa).

Positions 1-20 (MAQTLAQTKQISQSHTFDVS) are enriched in polar residues. The segment at 1–32 (MAQTLAQTKQISQSHTFDVSQSHHKTPDDTNS) is disordered. The 242-residue stretch at 37–278 (YSTQNLDLWY…PSNKKTEDYI (242 aa)) folds into the ABC transporter domain. 69–76 (GPSGCGKS) is a binding site for ATP.

Belongs to the ABC transporter superfamily. Phosphate importer (TC 3.A.1.7) family. As to quaternary structure, the complex is composed of two ATP-binding proteins (PstB), two transmembrane proteins (PstC and PstA) and a solute-binding protein (PstS).

The protein localises to the cell membrane. The catalysed reaction is phosphate(out) + ATP + H2O = ADP + 2 phosphate(in) + H(+). Part of the ABC transporter complex PstSACB involved in phosphate import. Responsible for energy coupling to the transport system. This Staphylococcus aureus (strain MRSA252) protein is Phosphate import ATP-binding protein PstB.